Here is a 234-residue protein sequence, read N- to C-terminus: Protein-toxin resistance protein KTD1 (234 aa).

The Cytoplasmic segment spans residues 1 to 47 (MQTPSENTDVKMDTLDEPSAHLIEENVALPEDTFSSHLSYVLYEIAH). Residues 48 to 68 (CKPIMFMIIIIVSLISLIVLF) traverse the membrane as a helical segment. Positions 68–75 (FHDNDGCT) are required for resistance to killer toxin K28, a protein-toxin encoded by the M28 virus. Residues 69 to 76 (HDNDGCTV) are Extracellular-facing. The helical transmembrane segment at 77-97 (ILVMSLIVASMALMVVAAFTF) threads the bilayer. The Cytoplasmic segment spans residues 98 to 234 (GKAITEQEFM…RKQYPDADLP (137 aa)). The required for resistance to killer toxin K28, a protein-toxin encoded by the M28 virus stretch occupies residues 147–234 (FYSGKKCHEF…RKQYPDADLP (88 aa)). The disordered stretch occupies residues 168–187 (SHSDSSSNSAEDTQSPVSAG). The span at 177–187 (AEDTQSPVSAG) shows a compositional bias: polar residues. Lysine 217 is covalently cross-linked (Glycyl lysine isopeptide (Lys-Gly) (interchain with G-Cter in ubiquitin)).

This sequence belongs to the DUP/COS family.

The protein resides in the vacuole membrane. Its subcellular location is the golgi apparatus. It localises to the trans-Golgi network membrane. The protein localises to the endosome membrane. Functionally, confers resistance to killer toxin K28, a protein-toxin encoded by the M28 virus that uses S.cerevisiae as a host. Probably acts against K28 after endocytosis of the protein-toxin. The protein is Protein-toxin resistance protein KTD1 of Saccharomyces cerevisiae (strain ATCC 204508 / S288c) (Baker's yeast).